Consider the following 433-residue polypeptide: Keratin, type I cytoskeletal 17 (433 aa).

A disordered region spans residues 1–24 (MTTTIRQFTSSSSIKGSSGLGGGS). The head stretch occupies residues 1 to 83 (MTTTIRQFTS…GGVDGLLAGG (83 aa)). A phosphoserine mark is found at S12 and S13. Residue K15 forms a Glycyl lysine isopeptide (Lys-Gly) (interchain with G-Cter in SUMO1); alternate linkage. A Glycyl lysine isopeptide (Lys-Gly) (interchain with G-Cter in SUMO2); alternate cross-link involves residue K15. Phosphoserine is present on residues S25, S32, S34, and S39. Residue S44 is modified to Phosphoserine; by RPS6KA1. The coil 1A stretch occupies residues 84–120 (EKATMQNLNDRLASYLDKVRALEEANTELEVKIRDWY). One can recognise an IF rod domain in the interval 84–395 (EKATMQNLND…RLLEGEDAHL (312 aa)). Phosphothreonine is present on T110. The interval 121 to 138 (QKQAPGPARDYSAYYHTI) is linker 1. The segment at 139–230 (EDLKNKILVA…NHEEEMNALR (92 aa)) is coil 1B. A linker 12 region spans residues 231–250 (GQVGGEINVEMDAAPGVDLS). The segment at 251–392 (RILSEMRDQY…TYRRLLEGED (142 aa)) is coil 2. K278 is covalently cross-linked (Glycyl lysine isopeptide (Lys-Gly) (interchain with G-Cter in SUMO2)). At T279 the chain carries Phosphothreonine. At S323 the chain carries Phosphoserine. Residues 393–433 (AHLTQYKPKEPVTTRQVRTIVEEVQDGKVISSREQVHQTTR) are tail. Glycyl lysine isopeptide (Lys-Gly) (interchain with G-Cter in SUMO1); alternate cross-links involve residues K399, K401, and K420. Residues K399, K401, and K420 each participate in a glycyl lysine isopeptide (Lys-Gly) (interchain with G-Cter in SUMO2); alternate cross-link.

Belongs to the intermediate filament family. As to quaternary structure, heterodimer of a type I and a type II keratin. KRT17 associates with KRT6 isomers (KRT6A or KRT6B). Interacts with TRADD and SFN. Phosphorylation at Ser-44 occurs in a growth- and stress-dependent fashion in skin keratinocytes, it has no effect on filament organization. As to expression, expressed strongly in outer root sheath and medulla region of hair follicle and in the early differentiating epithelial cells (trichocytes) within the hair bulb region. Weak expression in the matrix cells of hair bulb. Also present in the sweat gland within the skin, vibrissae follicle, salivary gland, tooth and thymus.

It is found in the cytoplasm. Its function is as follows. Type I keratin involved in the formation and maintenance of various skin appendages, specifically in determining shape and orientation of hair. Required for the correct growth of hair follicles, in particular for the persistence of the anagen (growth) state. Modulates the function of TNF-alpha in the specific context of hair cycling. Regulates protein synthesis and epithelial cell growth through binding to the adapter protein SFN and by stimulating Akt/mTOR pathway. Involved in tissue repair. May be a marker of basal cell differentiation in complex epithelia and therefore indicative of a certain type of epithelial 'stem cells'. Acts as a promoter of epithelial proliferation by acting a regulator of immune response in skin: promotes Th1/Th17-dominated immune environment contributing to the development of basaloid skin tumors. May act as an autoantigen in the immunopathogenesis of psoriasis, with certain peptide regions being a major target for autoreactive T-cells and hence causing their proliferation. The sequence is that of Keratin, type I cytoskeletal 17 (Krt17) from Mus musculus (Mouse).